The chain runs to 160 residues: Serine-protein kinase RsbW (160 aa).

This sequence belongs to the anti-sigma-factor family.

It catalyses the reaction L-seryl-[protein] + ATP = O-phospho-L-seryl-[protein] + ADP + H(+). The catalysed reaction is L-threonyl-[protein] + ATP = O-phospho-L-threonyl-[protein] + ADP + H(+). Its function is as follows. Negative regulator of sigma-B activity. Phosphorylates and inactivates its specific antagonist protein, RsbV. Upon phosphorylation of RsbV, RsbW is released and binds to sigma-B, thereby blocking its ability to form an RNA polymerase holoenzyme (E-sigma-B). The chain is Serine-protein kinase RsbW from Bacillus cereus (strain B4264).